A 626-amino-acid chain; its full sequence is Phosphoenolpyruvate carboxykinase (ATP) 2 (626 aa).

2 disordered regions span residues 1-23 (MASP…APVN) and 64-86 (PNLV…KHQQ). Residue 324-331 (GLSGTGKT) coordinates ATP.

The protein belongs to the phosphoenolpyruvate carboxykinase (ATP) family. Homohexamer.

The protein resides in the cytoplasm. The enzyme catalyses oxaloacetate + ATP = phosphoenolpyruvate + ADP + CO2. It participates in carbohydrate biosynthesis; gluconeogenesis. This chain is Phosphoenolpyruvate carboxykinase (ATP) 2 (PCK2), found in Urochloa panicoides (Panic liverseed grass).